A 576-amino-acid chain; its full sequence is Arginine--tRNA ligase (576 aa).

The short motif at 132–142 is the 'HIGH' region element; it reads ANPTGPMHIGH.

Belongs to the class-I aminoacyl-tRNA synthetase family. In terms of assembly, monomer.

Its subcellular location is the cytoplasm. The catalysed reaction is tRNA(Arg) + L-arginine + ATP = L-arginyl-tRNA(Arg) + AMP + diphosphate. The sequence is that of Arginine--tRNA ligase from Ehrlichia chaffeensis (strain ATCC CRL-10679 / Arkansas).